The chain runs to 395 residues: Sulfate adenylyltransferase (395 aa).

This sequence belongs to the sulfate adenylyltransferase family.

It catalyses the reaction sulfate + ATP + H(+) = adenosine 5'-phosphosulfate + diphosphate. It participates in sulfur metabolism; hydrogen sulfide biosynthesis; sulfite from sulfate: step 1/3. In Synechococcus elongatus (strain ATCC 33912 / PCC 7942 / FACHB-805) (Anacystis nidulans R2), this protein is Sulfate adenylyltransferase.